A 122-amino-acid polypeptide reads, in one-letter code: Large ribosomal subunit protein uL14 (122 aa).

It belongs to the universal ribosomal protein uL14 family. In terms of assembly, part of the 50S ribosomal subunit. Forms a cluster with proteins L3 and L19. In the 70S ribosome, L14 and L19 interact and together make contacts with the 16S rRNA in bridges B5 and B8.

Its function is as follows. Binds to 23S rRNA. Forms part of two intersubunit bridges in the 70S ribosome. This is Large ribosomal subunit protein uL14 from Dehalococcoides mccartyi (strain ATCC BAA-2266 / KCTC 15142 / 195) (Dehalococcoides ethenogenes (strain 195)).